The following is an 87-amino-acid chain: Small ribosomal subunit protein bS20 (87 aa).

The segment at M1–R22 is disordered.

Belongs to the bacterial ribosomal protein bS20 family.

Binds directly to 16S ribosomal RNA. This Nitratidesulfovibrio vulgaris (strain DP4) (Desulfovibrio vulgaris) protein is Small ribosomal subunit protein bS20.